A 513-amino-acid chain; its full sequence is ATP synthase subunit alpha (513 aa).

Gly169 to Thr176 provides a ligand contact to ATP.

The protein belongs to the ATPase alpha/beta chains family. F-type ATPases have 2 components, CF(1) - the catalytic core - and CF(0) - the membrane proton channel. CF(1) has five subunits: alpha(3), beta(3), gamma(1), delta(1), epsilon(1). CF(0) has three main subunits: a(1), b(2) and c(9-12). The alpha and beta chains form an alternating ring which encloses part of the gamma chain. CF(1) is attached to CF(0) by a central stalk formed by the gamma and epsilon chains, while a peripheral stalk is formed by the delta and b chains.

It is found in the cell inner membrane. The enzyme catalyses ATP + H2O + 4 H(+)(in) = ADP + phosphate + 5 H(+)(out). Functionally, produces ATP from ADP in the presence of a proton gradient across the membrane. The alpha chain is a regulatory subunit. This chain is ATP synthase subunit alpha, found in Enterobacter sp. (strain 638).